Consider the following 70-residue polypeptide: Small, acid-soluble spore protein 1 (70 aa).

Belongs to the alpha/beta-type SASP family.

Its function is as follows. SASP are bound to spore DNA. They are double-stranded DNA-binding proteins that cause DNA to change to an a-like conformation. They protect the DNA backbone from chemical and enzymatic cleavage and are thus involved in dormant spore's high resistance to UV light. The chain is Small, acid-soluble spore protein 1 (sasP-1) from Bacillus cereus.